A 458-amino-acid chain; its full sequence is UDP-N-acetylmuramoylalanine--D-glutamate ligase (458 aa).

Gly-124–Thr-130 provides a ligand contact to ATP.

It belongs to the MurCDEF family.

The protein localises to the cytoplasm. It carries out the reaction UDP-N-acetyl-alpha-D-muramoyl-L-alanine + D-glutamate + ATP = UDP-N-acetyl-alpha-D-muramoyl-L-alanyl-D-glutamate + ADP + phosphate + H(+). Its pathway is cell wall biogenesis; peptidoglycan biosynthesis. Cell wall formation. Catalyzes the addition of glutamate to the nucleotide precursor UDP-N-acetylmuramoyl-L-alanine (UMA). This chain is UDP-N-acetylmuramoylalanine--D-glutamate ligase, found in Clostridium kluyveri (strain NBRC 12016).